The primary structure comprises 1257 residues: Phosphatidylinositol 3,4,5-trisphosphate 5-phosphatase 2 (1257 aa).

The SH2 domain maps to 21–117; it reads WYHRDLSRAA…GLVCALLLPV (97 aa). A compositionally biased stretch (basic and acidic residues) spans 119-132; it reads GEREPDPPDDRDAS. Residues 119 to 181 form a disordered region; it reads GEREPDPPDD…ESTPNGLSTV (63 aa). At Ser-132 the chain carries Phosphoserine. Residues 156–166 are compositionally biased toward pro residues; sequence PSSPLPTPETP. A Phosphothreonine modification is found at Thr-165. 2 positions are modified to phosphoserine: Ser-241 and Ser-353. At Tyr-887 the chain carries Phosphotyrosine. The residue at position 891 (Ser-891) is a Phosphoserine. The segment at 897 to 986 is disordered; sequence TGAKSKVPSV…PPKNSFNNPA (90 aa). Over residues 939–951 the composition is skewed to pro residues; it reads PPPTGRPPAPPRA. Positions 945–950 match the SH3-binding motif; sequence PPAPPR. Residues 952–966 are compositionally biased toward basic and acidic residues; the sequence is VPREEPLNPRLKSEG. The NPXY motif signature appears at 984–987; that stretch reads NPAY. Tyr-987 is modified (phosphotyrosine). Positions 999–1008 are enriched in low complexity; it reads PLEPPSLARA. A disordered region spans residues 999-1119; that stretch reads PLEPPSLARA…FLGEVASGDD (121 aa). Pro residues-rich tracts occupy residues 1049 to 1060 and 1088 to 1104; these read LPPPDFPPPPLP and GPPP…PPGT. A Phosphoserine modification is found at Ser-1132. The interval 1134–1196 is disordered; the sequence is VDYAPGPGRS…PQGGRASGLG (63 aa). 2 positions are modified to phosphotyrosine: Tyr-1136 and Tyr-1161. An SAM domain is found at 1195–1257; sequence LGEAGMGAWL…LLLDTLQLSK (63 aa). Ser-1256 is subject to Phosphoserine.

The protein belongs to the inositol 1,4,5-trisphosphate 5-phosphatase family. Interacts with tyrosine phosphorylated form of SHC1. Interacts with EGFR. Upon stimulation by the EGF signaling pathway, it forms a complex with SHC1 and EGFR. Interacts with cytoskeletal protein SORBS3/vinexin, promoting its localization to the periphery of cells. Forms a complex with filamin (FLNA or FLNB), actin, GPIb (GP1BA or GP1BB) that regulates cortical and submembraneous actin. Interacts with c-Met/MET, when c-Met/MET is phosphorylated on 'Tyr-1356'. Interacts with p130Cas/BCAR1. Interacts with CENTD3/ARAP3 via its SAM domain. Interacts with c-Cbl/CBL and CAP/SORBS1. Interacts with activated EPHA2 receptor. Interacts with receptors FCGR2A. Interacts with FCGR2B. Interacts with tyrosine kinase ABL1. Interacts with tyrosine kinase TEC. Interacts with CSF1R. Interacts (via N-terminus) with SH3YL1 (via SH3 domain). Interacts (via SH2 domain) with tyrosine phosphorylated KLRC1 (via ITIM). Interacts with NEDD9/HEF1. Tyrosine phosphorylated by the members of the SRC family after exposure to a diverse array of extracellular stimuli such as insulin, growth factors such as EGF or PDGF, chemokines, integrin ligands and hypertonic and oxidative stress. May be phosphorylated upon IgG receptor FCGR2B-binding. Phosphorylated at Tyr-987 following cell attachment and spreading. Phosphorylated at Tyr-1161 following EGF signaling pathway stimulation. In terms of tissue distribution, widely expressed.

Its subcellular location is the cytoplasm. It is found in the cytosol. The protein localises to the cytoskeleton. The protein resides in the membrane. It localises to the cell projection. Its subcellular location is the filopodium. It is found in the lamellipodium. The protein localises to the basal cell membrane. The protein resides in the nucleus. It localises to the nucleus speckle. Its subcellular location is the spindle pole. It catalyses the reaction a 1,2-diacyl-sn-glycero-3-phospho-(1D-myo-inositol-3,4,5-trisphosphate) + H2O = a 1,2-diacyl-sn-glycero-3-phospho-(1D-myo-inositol-3,4-bisphosphate) + phosphate. The enzyme catalyses 1,2-dioctanoyl-sn-glycero-3-phospho-(1D-myo-inositol-3,4,5-trisphosphate) + H2O = 1,2-dioctanoyl-sn-glycero-3-phospho-(1D-myo-inositol-3,4-bisphosphate) + phosphate. It carries out the reaction 1,2-dihexadecanoyl-sn-glycero-3-phospho-(1D-myo-inositol-3,4,5-trisphosphate) + H2O = 1,2-dihexadecanoyl-sn-glycero-3-phospho-(1D-myo-inositol-3,4-bisphosphate) + phosphate. Its activity is regulated as follows. Activated upon translocation to the sites of synthesis of PtdIns(3,4,5)P3 in the membrane. Enzymatic activity is enhanced in the presence of phosphatidylserine. Functionally, phosphatidylinositol (PtdIns) phosphatase that specifically hydrolyzes the 5-phosphate of phosphatidylinositol-3,4,5-trisphosphate (PtdIns(3,4,5)P3) to produce PtdIns(3,4)P2, thereby negatively regulating the PI3K (phosphoinositide 3-kinase) pathways. Required for correct mitotic spindle orientation and therefore progression of mitosis. Plays a central role in regulation of PI3K-dependent insulin signaling, although the precise molecular mechanisms and signaling pathways remain unclear. While overexpression reduces both insulin-stimulated MAP kinase and Akt activation, its absence does not affect insulin signaling or GLUT4 trafficking. Confers resistance to dietary obesity. May act by regulating AKT2, but not AKT1, phosphorylation at the plasma membrane. Part of a signaling pathway that regulates actin cytoskeleton remodeling. Required for the maintenance and dynamic remodeling of actin structures as well as in endocytosis, having a major impact on ligand-induced EGFR internalization and degradation. Participates in regulation of cortical and submembraneous actin by hydrolyzing PtdIns(3,4,5)P3 thereby regulating membrane ruffling. Regulates cell adhesion and cell spreading. Required for HGF-mediated lamellipodium formation, cell scattering and spreading. Acts as a negative regulator of EPHA2 receptor endocytosis by inhibiting via PI3K-dependent Rac1 activation. Acts as a regulator of neuritogenesis by regulating PtdIns(3,4,5)P3 level and is required to form an initial protrusive pattern, and later, maintain proper neurite outgrowth. Acts as a negative regulator of the FC-gamma-RIIA receptor (FCGR2A). Mediates signaling from the FC-gamma-RIIB receptor (FCGR2B), playing a central role in terminating signal transduction from activating immune/hematopoietic cell receptor systems. Upon stimulation by EGF, it is recruited by EGFR and dephosphorylates PtdIns(3,4,5)P3. Plays a negative role in regulating the PI3K-PKB pathway, possibly by inhibiting PKB activity. Down-regulates Fc-gamma-R-mediated phagocytosis in macrophages independently of INPP5D/SHIP1. In macrophages, down-regulates NF-kappa-B-dependent gene transcription by regulating macrophage colony-stimulating factor (M-CSF)-induced signaling. Plays a role in the localization of AURKA and NEDD9/HEF1 to the basolateral membrane at interphase in polarized cysts, thereby mediates cell cycle homeostasis, cell polarization and cilia assembly. Additionally promotion of cilia growth is also facilitated by hydrolysis of (PtdIns(3,4,5)P3) to PtdIns(3,4)P2. Promotes formation of apical membrane-initiation sites during the initial stages of lumen formation via Rho family-induced actin filament organization and CTNNB1 localization to cell-cell contacts. May also hydrolyze PtdIns(1,3,4,5)P4, and could thus affect the levels of the higher inositol polyphosphates like InsP6. Involved in endochondral ossification. The chain is Phosphatidylinositol 3,4,5-trisphosphate 5-phosphatase 2 from Mus musculus (Mouse).